The following is a 90-amino-acid chain: Probable Fe(2+)-trafficking protein (90 aa).

This sequence belongs to the Fe(2+)-trafficking protein family.

In terms of biological role, could be a mediator in iron transactions between iron acquisition and iron-requiring processes, such as synthesis and/or repair of Fe-S clusters in biosynthetic enzymes. The protein is Probable Fe(2+)-trafficking protein of Variovorax paradoxus (strain S110).